The chain runs to 492 residues: MKIDMRNISKSFGTNKVLEKIDLELQSGQIHALMGENGAGKSTLMNILTGLFPASTGTIYIDGEERTFSNPQEAEEFGISFIHQEMNTWPEMTVLENLFLGREIKTTFGLLNQKLMRQKALEAFKRLGVTIPLDIPIGNLSVGQQQMIEIAKSLLSQLSILVMDEPTAALTDRETENLFRVIRSLKQEGVGIVYISHRMEEIFKITDFVTVMRDGVIVDTKETSLTNSDELVKKMVGRKLEDYYPEKHSEIGPVAFEVSNLCGDNFEDVSFYVRKGEILGFSGLMGAGRTEVMRTIFGIDKKKSGKVKIDDQEITITSPSQAIKQGIGFLTENRKDEGLILDFNIKDNMTLPSTKDFSKHGFFDEKTSTTFVQQLINRLYIKSGRPDLEVGNLSGGNQQKVVLAKWIGIAPKVLILDEPTRGVDVGAKREIYQLMNELADRGVPIVMVSSDLPEILGVSDRIMVMHEGRISGELSRKEADQEKVMQLATGGK.

ABC transporter domains follow at residues 3 to 239 and 238 to 492; these read IDMR…VGRK and RKLE…TGGK. Position 35-42 (35-42) interacts with ATP; it reads GENGAGKS.

This sequence belongs to the ABC transporter superfamily. Ribose importer (TC 3.A.1.2.1) family. As to quaternary structure, the complex is composed of an ATP-binding protein (RbsA), two transmembrane proteins (RbsC) and a solute-binding protein (RbsB).

The protein localises to the cell membrane. The catalysed reaction is D-ribose(out) + ATP + H2O = D-ribose(in) + ADP + phosphate + H(+). Functionally, part of the ABC transporter complex RbsABC involved in ribose import. Responsible for energy coupling to the transport system. This chain is Ribose import ATP-binding protein RbsA, found in Streptococcus agalactiae serotype Ia (strain ATCC 27591 / A909 / CDC SS700).